The chain runs to 280 residues: Nucleotide-binding protein Swoo_4243 (280 aa).

Position 8–15 (8–15) interacts with ATP; sequence GRSGSGKS. 56–59 serves as a coordination point for GTP; it reads DVRN.

This sequence belongs to the RapZ-like family.

Displays ATPase and GTPase activities. This Shewanella woodyi (strain ATCC 51908 / MS32) protein is Nucleotide-binding protein Swoo_4243.